Here is a 719-residue protein sequence, read N- to C-terminus: Polyphosphate kinase (719 aa).

Residue Asn-54 coordinates ATP. 2 residues coordinate Mg(2+): Arg-379 and Arg-409. Residues 434-468 (THLKTHSKIALVVKRMNNKLTSFIHLGTGNYNDKT) form the PLD phosphodiesterase domain. Catalysis depends on His-439, which acts as the Phosphohistidine intermediate. The ATP site is built by Tyr-472, Arg-568, and His-596.

The protein belongs to the polyphosphate kinase 1 (PPK1) family. Mg(2+) serves as cofactor. Post-translationally, an intermediate of this reaction is the autophosphorylated ppk in which a phosphate is covalently linked to a histidine residue through a N-P bond.

It catalyses the reaction [phosphate](n) + ATP = [phosphate](n+1) + ADP. Its function is as follows. Catalyzes the reversible transfer of the terminal phosphate of ATP to form a long-chain polyphosphate (polyP). The sequence is that of Polyphosphate kinase from Staphylococcus saprophyticus subsp. saprophyticus (strain ATCC 15305 / DSM 20229 / NCIMB 8711 / NCTC 7292 / S-41).